Reading from the N-terminus, the 556-residue chain is 2-succinyl-5-enolpyruvyl-6-hydroxy-3-cyclohexene-1-carboxylate synthase (556 aa).

The protein belongs to the TPP enzyme family. MenD subfamily. In terms of assembly, homodimer. Mg(2+) is required as a cofactor. It depends on Mn(2+) as a cofactor. Requires thiamine diphosphate as cofactor.

It carries out the reaction isochorismate + 2-oxoglutarate + H(+) = 5-enolpyruvoyl-6-hydroxy-2-succinyl-cyclohex-3-ene-1-carboxylate + CO2. The protein operates within quinol/quinone metabolism; 1,4-dihydroxy-2-naphthoate biosynthesis; 1,4-dihydroxy-2-naphthoate from chorismate: step 2/7. Its pathway is quinol/quinone metabolism; menaquinone biosynthesis. In terms of biological role, catalyzes the thiamine diphosphate-dependent decarboxylation of 2-oxoglutarate and the subsequent addition of the resulting succinic semialdehyde-thiamine pyrophosphate anion to isochorismate to yield 2-succinyl-5-enolpyruvyl-6-hydroxy-3-cyclohexene-1-carboxylate (SEPHCHC). In Shigella boydii serotype 18 (strain CDC 3083-94 / BS512), this protein is 2-succinyl-5-enolpyruvyl-6-hydroxy-3-cyclohexene-1-carboxylate synthase.